Consider the following 153-residue polypeptide: Small ribosomal subunit protein uS7c (153 aa).

It belongs to the universal ribosomal protein uS7 family. In terms of assembly, part of the 30S ribosomal subunit.

It localises to the plastid. Functionally, one of the primary rRNA binding proteins, it binds directly to 16S rRNA where it nucleates assembly of the head domain of the 30S subunit. The protein is Small ribosomal subunit protein uS7c (rps7) of Helicosporidium sp. subsp. Simulium jonesii (Green alga).